The chain runs to 560 residues: Nitrite reductase (560 aa).

The N-terminal stretch at Met-1–Ala-26 is a signal peptide. Positions Ala-27 to Pro-29 are N-terminal tail. One can recognise a Cytochrome c domain in the interval Glu-30–Ile-126. 3 residues coordinate heme c: Cys-47, Cys-50, and His-51. The tract at residues Lys-61–Gly-80 is disordered. The segment covering Leu-63–Glu-78 has biased composition (basic and acidic residues). Heme c-binding residues include Thr-97 and Met-101. The D1-heme domain stretch occupies residues Pro-127–Tyr-560. Residues His-193, Arg-236, Ser-237, Tyr-256, Arg-382, and Gln-500 each coordinate heme d1.

As to quaternary structure, homodimer in solution. It depends on heme c as a cofactor. Requires heme as cofactor.

It localises to the periplasm. The catalysed reaction is nitric oxide + Fe(III)-[cytochrome c] + H2O = Fe(II)-[cytochrome c] + nitrite + 2 H(+). It carries out the reaction A + NH4(+) + H2O = hydroxylamine + AH2 + H(+). The polypeptide is Nitrite reductase (nirS) (Stutzerimonas stutzeri (Pseudomonas stutzeri)).